The chain runs to 295 residues: Probable lipid kinase YegS-like (295 aa).

One can recognise a DAGKc domain in the interval M1–L129. ATP-binding positions include T39, G65–D71, and T92. Residues M210, D213, and L215 each contribute to the Mg(2+) site. E264 serves as the catalytic Proton acceptor.

Belongs to the diacylglycerol/lipid kinase family. YegS lipid kinase subfamily. The cofactor is Mg(2+). Ca(2+) serves as cofactor.

Its subcellular location is the cytoplasm. In terms of biological role, probably phosphorylates lipids; the in vivo substrate is unknown. This chain is Probable lipid kinase YegS-like, found in Pseudomonas putida (strain ATCC 47054 / DSM 6125 / CFBP 8728 / NCIMB 11950 / KT2440).